The sequence spans 205 residues: Penta-EF hand domain-containing protein 2 (205 aa).

3 consecutive EF-hand domains span residues 45 to 75 (EMQS…GGTP), 76 to 111 (LGIE…INNL), and 119 to 141 (DRNF…SGFQ). Residues Asp54, Asn56, Ser58, Thr60, Glu65, Asp89, Asn91, Asn93, Gln95, and Glu100 each contribute to the Ca(2+) site.

This sequence belongs to the Peflin/Sorcin family. In contrast to pefA, does not form homodimers in presence of Ca(2+). May form heterodimers with pefA.

It is found in the cytoplasm. The protein resides in the membrane. The chain is Penta-EF hand domain-containing protein 2 (pefB) from Dictyostelium discoideum (Social amoeba).